A 116-amino-acid polypeptide reads, in one-letter code: Ly-6/neurotoxin-like protein 1 (116 aa).

Residues Met-1 to Ala-20 form the signal peptide. The region spanning Leu-21–Ile-107 is the UPAR/Ly6 domain. Cystine bridges form between Cys-23–Cys-46, Cys-26–Cys-33, Cys-39–Cys-64, Cys-68–Cys-85, and Cys-86–Cys-91. Cys-91 carries GPI-anchor amidated cysteine lipidation. A propeptide spans Asn-92–Leu-116 (removed in mature form).

As to quaternary structure, interacts with nAChRs containing alpha-4:beta-2 (CHRNA4:CHRNB2) and alpha-7 (CHRNA7) subunits. Interacts with CHRNA4 probably in the endoplasmic reticulum prior to nAChR pentameric assembly. Interacts with KCNA2/Potassium voltage-gated channel subfamily A member 2.

Its subcellular location is the cell membrane. It is found in the cell projection. The protein resides in the dendrite. It localises to the endoplasmic reticulum. Its function is as follows. Acts in different tissues through interaction to nicotinic acetylcholine receptors (nAChRs). The proposed role as modulator of nAChR activity seems to be dependent on the nAChR subtype and stoichiometry, and to involve an effect on nAChR trafficking and its cell surface expression, and on single channel properties of the nAChR inserted in the plasma membrane. Modulates functional properties of nicotinic acetylcholine receptors (nAChRs) to prevent excessive excitation, and hence neurodegeneration. Enhances desensitization by increasing both the rate and extent of desensitization of alpha-4:beta-2-containing nAChRs and slowing recovery from desensitization. Promotes large amplitude ACh-evoked currents through alpha-4:beta-2 nAChRs. Is involved in regulation of the nAChR pentameric assembly in the endoplasmic reticulum. Shifts stoichiometry from high sensitivity alpha-4(2):beta-2(3) to low sensitivity alpha-4(3):beta-2(2) nAChR. In vitro modulates alpha-3:beta-4-containing nAChRs. Reduces cell surface expression of (alpha-3:beta-4)(2):beta-4 and (alpha-3:beta-4)(2):alpha-5 nAChRs suggesting an interaction with nAChR alpha-3(-):(+)beta-4 subunit interfaces and an allosteric mode. Corresponding single channel effects characterized by decreased unitary conductance, altered burst proportions and enhanced desensitization/inactivation seem to depend on nAChR alpha:alpha subunit interfaces and are greater in (alpha-3:beta-2)(2):alpha-3 when compared to (alpha-3:beta-2)(2):alpha-5 nAChRs. Prevents plasticity in the primary visual cortex late in life. The chain is Ly-6/neurotoxin-like protein 1 from Homo sapiens (Human).